The sequence spans 81 residues: Large ribosomal subunit protein uL29c (81 aa).

The protein belongs to the universal ribosomal protein uL29 family.

Its subcellular location is the plastid. The protein localises to the chloroplast. The protein is Large ribosomal subunit protein uL29c of Phaeodactylum tricornutum (strain CCAP 1055/1).